A 178-amino-acid polypeptide reads, in one-letter code: uncharacterized protein (178 aa).

Belongs to the IIV-6 136R family.

This is an uncharacterized protein from Invertebrate iridescent virus 6 (IIV-6).